The following is a 299-amino-acid chain: MRVIPLASESLGVRSLATFVEAGGLRILIDPGVALGPKRYGLPPAEVELKTLQQMRKKLQGYARKADIVTISHYHYDHHTPFFEGLYESSSEDYAREIYAGKILFIKHPTENINFSQRKRAWAFLKNAEAIAKKIEYADGRSFDLGGVTIEFSPAVPHGSEGSKLGFVVMVLIDDGSKRVIHASDIQLLNRRSVKWIIEKNPDLLITGGPPTYLGPRATGSWETGVKNLNEIILETNAEVILDHHIVRDKRYPEFFDELEKRPKTFAGYLKVEDRPLEAYRRELHKIEKGEGAEVPFRL.

Belongs to the UPF0282 family.

The protein is UPF0282 protein TK1681 of Thermococcus kodakarensis (strain ATCC BAA-918 / JCM 12380 / KOD1) (Pyrococcus kodakaraensis (strain KOD1)).